We begin with the raw amino-acid sequence, 597 residues long: Leishmanolysin (597 aa).

An N-terminal signal peptide occupies residues 1-39; sequence MSVDSSSTHRHRCVAARLVPLAAAGAAVTVAVGTAAAWA. Positions 40 to 99 are cleaved as a propeptide — activation peptide; that stretch reads HAGAVQHRCIHDAMQARVRQSVAAQRMAPSAVSAVGLPHVTLDAGNTAAGADPSTGTANV. 2 cysteine pairs are disulfide-bonded: cysteine 124-cysteine 141 and cysteine 190-cysteine 229. Histidine 263 is a binding site for Zn(2+). Residue glutamate 264 is part of the active site. Histidine 267 provides a ligand contact to Zn(2+). A glycan (N-linked (GlcNAc...) asparagine) is linked at asparagine 299. 7 disulfides stabilise this stretch: cysteine 313–cysteine 383, cysteine 390–cysteine 452, cysteine 403–cysteine 422, cysteine 412–cysteine 486, cysteine 463–cysteine 507, cysteine 512–cysteine 562, and cysteine 532–cysteine 555. Histidine 332 is a Zn(2+) binding site. N-linked (GlcNAc...) asparagine glycosylation is present at asparagine 404. A lipid anchor (GPI-anchor amidated asparagine) is attached at asparagine 574. A propeptide spans 575 to 597 (removed in mature form); that stretch reads AAGRRGPRAATALVVAALLAVAL.

The protein belongs to the peptidase M8 family. It depends on Zn(2+) as a cofactor.

It is found in the cell membrane. The enzyme catalyses Preference for hydrophobic residues at P1 and P1' and basic residues at P2' and P3'. A model nonapeptide is cleaved at -Ala-Tyr-|-Leu-Lys-Lys-.. In terms of biological role, has an integral role during the infection of macrophages in the mammalian host. This Leishmania amazonensis protein is Leishmanolysin (gp63).